The sequence spans 168 residues: Ribosome maturation factor RimM (168 aa).

Residues 96-168 (EGDYYWTDLI…IIVVEWDADF (73 aa)) enclose the PRC barrel domain.

The protein belongs to the RimM family. Binds ribosomal protein uS19.

Its subcellular location is the cytoplasm. Functionally, an accessory protein needed during the final step in the assembly of 30S ribosomal subunit, possibly for assembly of the head region. Essential for efficient processing of 16S rRNA. May be needed both before and after RbfA during the maturation of 16S rRNA. It has affinity for free ribosomal 30S subunits but not for 70S ribosomes. This Coxiella burnetii (strain Dugway 5J108-111) protein is Ribosome maturation factor RimM.